A 559-amino-acid chain; its full sequence is 2-succinyl-5-enolpyruvyl-6-hydroxy-3-cyclohexene-1-carboxylate synthase (559 aa).

The protein belongs to the TPP enzyme family. MenD subfamily. Homodimer. It depends on Mg(2+) as a cofactor. Requires Mn(2+) as cofactor. Thiamine diphosphate serves as cofactor.

The enzyme catalyses isochorismate + 2-oxoglutarate + H(+) = 5-enolpyruvoyl-6-hydroxy-2-succinyl-cyclohex-3-ene-1-carboxylate + CO2. It participates in quinol/quinone metabolism; 1,4-dihydroxy-2-naphthoate biosynthesis; 1,4-dihydroxy-2-naphthoate from chorismate: step 2/7. It functions in the pathway quinol/quinone metabolism; menaquinone biosynthesis. Catalyzes the thiamine diphosphate-dependent decarboxylation of 2-oxoglutarate and the subsequent addition of the resulting succinic semialdehyde-thiamine pyrophosphate anion to isochorismate to yield 2-succinyl-5-enolpyruvyl-6-hydroxy-3-cyclohexene-1-carboxylate (SEPHCHC). This chain is 2-succinyl-5-enolpyruvyl-6-hydroxy-3-cyclohexene-1-carboxylate synthase, found in Cytophaga hutchinsonii (strain ATCC 33406 / DSM 1761 / CIP 103989 / NBRC 15051 / NCIMB 9469 / D465).